An 89-amino-acid chain; its full sequence is Small ribosomal subunit protein uS15 (89 aa).

It belongs to the universal ribosomal protein uS15 family. As to quaternary structure, part of the 30S ribosomal subunit. Forms a bridge to the 50S subunit in the 70S ribosome, contacting the 23S rRNA.

Functionally, one of the primary rRNA binding proteins, it binds directly to 16S rRNA where it helps nucleate assembly of the platform of the 30S subunit by binding and bridging several RNA helices of the 16S rRNA. Its function is as follows. Forms an intersubunit bridge (bridge B4) with the 23S rRNA of the 50S subunit in the ribosome. The protein is Small ribosomal subunit protein uS15 of Elusimicrobium minutum (strain Pei191).